Reading from the N-terminus, the 543-residue chain is DM7 family protein GG19680 (543 aa).

Positions 415-430 (GETQEMDEAHPTKEES) are enriched in basic and acidic residues. The disordered stretch occupies residues 415–443 (GETQEMDEAHPTKEESKSEEEGEVQSGSQ).

It belongs to the DM7 family.

The chain is DM7 family protein GG19680 from Drosophila erecta (Fruit fly).